A 149-amino-acid polypeptide reads, in one-letter code: Large ribosomal subunit protein uL11 (149 aa).

This sequence belongs to the universal ribosomal protein uL11 family. As to quaternary structure, part of the ribosomal stalk of the 50S ribosomal subunit. Interacts with L10 and the large rRNA to form the base of the stalk. L10 forms an elongated spine to which L12 dimers bind in a sequential fashion forming a multimeric L10(L12)X complex. One or more lysine residues are methylated.

In terms of biological role, forms part of the ribosomal stalk which helps the ribosome interact with GTP-bound translation factors. The sequence is that of Large ribosomal subunit protein uL11 from Azorhizobium caulinodans (strain ATCC 43989 / DSM 5975 / JCM 20966 / LMG 6465 / NBRC 14845 / NCIMB 13405 / ORS 571).